Reading from the N-terminus, the 879-residue chain is MGRPAPRPLLLALLSLAVCRGRVVRVPAGTLVRVVGTELVIPCNVSDYDGPSEQNFDWSFSSSGSSFVELASTWEVGFPAQLYRERLQRGDILLRRTANDAVELHIKNVQPSDQGHYKCSTPSTDATVQGNYEDTVQVKVLADALVVGPSSRPPPGLSLREGEPFELRCIASTTSPLHTHLALRWELHRGPVHRSILALSHEGRFHPGPGYEQRYHSGDVRLDTVGSDAYRLSVARALSADQGSYRCVVSEWITEQGSWQEIQEKAVEVATVVIQPTALQLAVPRTVSVTEGKDLDLSCNITTDRVDDVRPEVTWYFKKTPDTSLLASHMLARLDRDSLVHSSPHVALSHVDTRSYHLLVRDVSKENSGYYLCLVALWAPGHNRSWHKVAEAMSAPSGVSVTWLEPEYQVYLNASKVPGFSDDPTELQCRVIDTKRLEAGVRLTVSWYYRMTRRNDDVVASELLAVMDGDWTLRYGERSKQRAQDGEFIFSKEHTDTFNFRIQRTTEEDRGNYYCVVSAWTRQRNNSWVKSKDVFSKPVNIFWASEDSVLVVKARQPKPFFAAGNTFEMTCKVSSKNIKSPRYSVLITAEKPVGDLSSPNETKYIISLDQDSVVKLENWTDASRVDGVVLEKVQEDEFRYRMYQTQVSDAGLYRCMVTAWSPIGGSLWREAATSLSNPIEIDFQTSGPTFNASVHSDTPSVTRGDLIKLFCIVTVEGAVLDPDDMAFDVSWFAVHSFGLDKAPVLLSSLDRKGVVTTGQRDWKSTVSLERVSVLEFLLQVHGSEDQDFGNYYCSVTPWVRSPTGSWQREAEIHSRPIFITVKMDVLNAFKYPLLIGVGLSTVIGLLSCLIGYCSSHWCCKKEVRETRRERRRLMSMEMD.

An N-terminal signal peptide occupies residues 1–21 (MGRPAPRPLLLALLSLAVCRG). Ig-like C2-type domains lie at 22-137 (RVVR…DTVQ) and 149-263 (PSSR…QEIQ). The Extracellular portion of the chain corresponds to 22-832 (RVVRVPAGTL…MDVLNAFKYP (811 aa)). Intrachain disulfides connect C43-C119 and C169-C247. A glycan (N-linked (GlcNAc...) asparagine) is linked at N44. Positions 89–91 (RGD) match the Cell attachment site motif. T271 is modified (phosphothreonine). 4 Ig-like C2-type domains span residues 276–389 (PTAL…WHKV), 406–536 (PEYQ…DVFS), 544–662 (ASED…AWSP), and 688–813 (PTFN…AEIH). A disulfide bond links C299 and C373. N-linked (GlcNAc...) asparagine glycosylation is found at N300, N383, and N413. An Endoplasmic reticulum retention signal motif is present at residues 424-427 (PTEL). C429 and C515 form a disulfide bridge. N-linked (GlcNAc...) asparagine glycans are attached at residues N525, N600, N618, and N691. C571 and C655 are oxidised to a cystine. Residues 703-705 (RGD) carry the Cell attachment site motif. A disulfide bridge connects residues C711 and C793. A helical membrane pass occupies residues 833-853 (LLIGVGLSTVIGLLSCLIGYC). Over 854-879 (SSHWCCKKEVRETRRERRRLMSMEMD) the chain is Cytoplasmic.

Interacts with CD9 and CD81. Part of a complex composed of CD9, CD81 and IGSF8. Also seems to interact with CD63, CD82 and CD151. In terms of tissue distribution, expressed in myoblasts (at protein level).

Its subcellular location is the endoplasmic reticulum membrane. The protein resides in the golgi apparatus. It localises to the trans-Golgi network membrane. In terms of biological role, inhibits the binding of prostaglandin F2-alpha (PGF2-alpha) to its specific FP receptor, by decreasing the receptor number rather than the affinity constant. Functional coupling with the prostaglandin F2-alpha receptor seems to occur. In myoblasts, associates with tetraspanins CD9 and CD81 to prevent myotube fusion during muscle regeneration. The chain is Prostaglandin F2 receptor negative regulator (Ptgfrn) from Mus musculus (Mouse).